Reading from the N-terminus, the 178-residue chain is Cytidylate kinase 2 (178 aa).

7–15 lines the ATP pocket; it reads GKSGCGNTT.

It belongs to the cytidylate kinase family. Type 2 subfamily.

The protein resides in the cytoplasm. It catalyses the reaction CMP + ATP = CDP + ADP. It carries out the reaction dCMP + ATP = dCDP + ADP. The chain is Cytidylate kinase 2 from Borrelia garinii subsp. bavariensis (strain ATCC BAA-2496 / DSM 23469 / PBi) (Borreliella bavariensis).